A 176-amino-acid polypeptide reads, in one-letter code: MSEKTIAIKAQKVEEIADQFKNAASAVVVDARGLTVAQSTELRHQLREEGIVLEVIKNKILTRAAEKAGFAELNDIFAGPSAVAFSNDDAVAPSRILKKFADANEKLEIKGGVVDGTIANIEDINKYASLPSREGLLGQLMAEFQFSIRSFAYAVKAVQDKLEEGGEAAEEALAAE.

Belongs to the universal ribosomal protein uL10 family. Part of the ribosomal stalk of the 50S ribosomal subunit. The N-terminus interacts with L11 and the large rRNA to form the base of the stalk. The C-terminus forms an elongated spine to which L12 dimers bind in a sequential fashion forming a multimeric L10(L12)X complex.

Its function is as follows. Forms part of the ribosomal stalk, playing a central role in the interaction of the ribosome with GTP-bound translation factors. This Leuconostoc citreum (strain KM20) protein is Large ribosomal subunit protein uL10.